A 465-amino-acid polypeptide reads, in one-letter code: Tubulin gamma chain (465 aa).

144-150 is a GTP binding site; sequence AGGTGSG.

This sequence belongs to the tubulin family.

It is found in the cytoplasm. The protein localises to the cytoskeleton. The protein resides in the microtubule organizing center. Its subcellular location is the spindle pole body. In terms of biological role, tubulin is the major constituent of microtubules. The gamma chain is found at microtubule organizing centers (MTOC) such as the spindle poles or the centrosome, suggesting that it is involved in the minus-end nucleation of microtubule assembly. The chain is Tubulin gamma chain (TUB4) from Candida glabrata (strain ATCC 2001 / BCRC 20586 / JCM 3761 / NBRC 0622 / NRRL Y-65 / CBS 138) (Yeast).